A 91-amino-acid polypeptide reads, in one-letter code: MNISKPQQRTLHALAQGARIELLRDDHGRIVAAYCITGEGWRLSDCSLAVFKALKKRRFIASSGGGPYRITRDGAVNLRAQVDNRVTARGG.

Belongs to the UPF0386 family.

The polypeptide is UPF0386 protein Caul_4643 (Caulobacter sp. (strain K31)).